A 504-amino-acid polypeptide reads, in one-letter code: ATP synthase subunit alpha (504 aa).

169–176 contacts ATP; the sequence is GDRQTGKT.

Belongs to the ATPase alpha/beta chains family. As to quaternary structure, F-type ATPases have 2 components, CF(1) - the catalytic core - and CF(0) - the membrane proton channel. CF(1) has five subunits: alpha(3), beta(3), gamma(1), delta(1), epsilon(1). CF(0) has three main subunits: a(1), b(2) and c(9-12). The alpha and beta chains form an alternating ring which encloses part of the gamma chain. CF(1) is attached to CF(0) by a central stalk formed by the gamma and epsilon chains, while a peripheral stalk is formed by the delta and b chains.

Its subcellular location is the cell membrane. The catalysed reaction is ATP + H2O + 4 H(+)(in) = ADP + phosphate + 5 H(+)(out). Its function is as follows. Produces ATP from ADP in the presence of a proton gradient across the membrane. The alpha chain is a regulatory subunit. The protein is ATP synthase subunit alpha of Clostridium botulinum (strain Langeland / NCTC 10281 / Type F).